Consider the following 274-residue polypeptide: Rhamnulose-1-phosphate aldolase (274 aa).

The active site involves Glu-117. Residues His-141, His-143, and His-212 each contribute to the Zn(2+) site.

It belongs to the aldolase class II family. RhaD subfamily. In terms of assembly, homotetramer. Requires Zn(2+) as cofactor.

It localises to the cytoplasm. It catalyses the reaction L-rhamnulose 1-phosphate = (S)-lactaldehyde + dihydroxyacetone phosphate. The protein operates within carbohydrate degradation; L-rhamnose degradation; glycerone phosphate from L-rhamnose: step 3/3. Its function is as follows. Catalyzes the reversible cleavage of L-rhamnulose-1-phosphate to dihydroxyacetone phosphate (DHAP) and L-lactaldehyde. This Escherichia coli O157:H7 protein is Rhamnulose-1-phosphate aldolase.